Reading from the N-terminus, the 234-residue chain is MPTTPIPFTPLHMFRRLLCVGLFLFAGIHTTLGATLPLPSTSYKYTVLDQDLSAALQEFGNNLKISVNISAEVKGRIRGRIPELSPREFLDRLTDLYDLQWYYDGVVLYVSAAKEAQTRMLVLSSVHFSAFKLALDKLDISDERYPVRPAPGNGLVLVSGPPRFIALIEQTLNGLLAVAQAQPRATDTPARESVMVLFRGSSTTVVRGGRPEVFYTSEMLPENDDGGKAELSKK.

The helical transmembrane segment at 17–36 (LLCVGLFLFAGIHTTLGATL) threads the bilayer.

The protein localises to the membrane. Its function is as follows. Regulates cultivar-specific nodulation of soybean. The polypeptide is Nodulation protein NolW (nolW) (Rhizobium fredii (Sinorhizobium fredii)).